An 891-amino-acid chain; its full sequence is Metabotropic glutamate receptor-like protein N (891 aa).

Residues 1 to 399 are Extracellular-facing; the sequence is MKLYTHKINR…FKPISKTIEY (399 aa). 13 N-linked (GlcNAc...) asparagine glycosylation sites follow: N52, N85, N88, N125, N132, N224, N298, N312, N320, N325, N353, N363, and N375. A disordered region spans residues 52–91; the sequence is NNSNSNSNNNNNNNNNNNNNNNNNNNNNNNNNNNNSNNSN. A helical transmembrane segment spans residues 400 to 420; sequence GITIVSSILIGALIIIQICII. Residues 421-433 are Cytoplasmic-facing; sequence KYKNKPSFKSASP. A helical membrane pass occupies residues 434–454; the sequence is TFLIFIVIGGIFVYIGVIIWV. At 455–461 the chain is on the extracellular side; the sequence is SGVNVFT. A helical transmembrane segment spans residues 462 to 482; the sequence is CNAKFWLISLGLTTMIGGIVV. Topologically, residues 483–505 are cytoplasmic; sequence KNFRIWLIFDNPKLYHIKITNLQ. A helical transmembrane segment spans residues 506–526; that stretch reads LLPWVLGMFLLNVFLLSLITG. The Extracellular segment spans residues 527–555; it reads LGKLTPFKVFPNDEKFSSYEIQCEMMDGG. The helical transmembrane segment at 556–576 threads the bilayer; sequence LIALYFLLGYFAIIVMIGIFV. The Cytoplasmic portion of the chain corresponds to 577 to 592; the sequence is SWKIRIVDIEEFNESK. Residues 593 to 613 traverse the membrane as a helical segment; that stretch reads SVAYSLYSIVFCLLIIAPLTI. Topologically, residues 614-625 are extracellular; sequence SKTGHNTEILCS. Residues 626–646 form a helical membrane-spanning segment; that stretch reads GFIFIVAAIITIMFIPKFWAL. Over 647–891 the chain is Cytoplasmic; it reads KIYGAEGSNE…SDSNSDSIIQ (245 aa). 3 disordered regions span residues 660–689, 742–827, and 869–891; these read QSSSSTSKRKNKSSTTNDPTNLDSISKKSS, NEMT…ILTP, and DEVIENSDSESESSDSNSDSIIQ. Positions 742 to 767 are enriched in polar residues; that stretch reads NEMTYNDDPTYTEPSEQPTYTESSEQ. Low complexity predominate over residues 772 to 782; it reads PRTLTATPRTN. Positions 783 to 820 are enriched in polar residues; the sequence is DLTTPRTNDLTTPRTNDLITPRTNDLSTPRTNDLNTPR. Residues 872-881 show a composition bias toward acidic residues; sequence IENSDSESES. The segment covering 882–891 has biased composition (low complexity); the sequence is SDSNSDSIIQ.

This sequence belongs to the G-protein coupled receptor 3 family. GABA-B receptor subfamily.

It is found in the membrane. This Dictyostelium discoideum (Social amoeba) protein is Metabotropic glutamate receptor-like protein N (grlN).